Consider the following 128-residue polypeptide: Transcription antitermination protein NusB (128 aa).

Belongs to the NusB family.

Its function is as follows. Involved in transcription antitermination. Required for transcription of ribosomal RNA (rRNA) genes. Binds specifically to the boxA antiterminator sequence of the ribosomal RNA (rrn) operons. The protein is Transcription antitermination protein NusB of Staphylococcus haemolyticus (strain JCSC1435).